The sequence spans 353 residues: 3-isopropylmalate dehydrogenase (353 aa).

Residues Arg97, Arg107, Arg135, and Asp219 each coordinate substrate. Residues Asp219, Asp243, and Asp247 each contribute to the Mg(2+) site.

This sequence belongs to the isocitrate and isopropylmalate dehydrogenases family. LeuB type 1 subfamily. As to quaternary structure, homodimer. Mg(2+) serves as cofactor. Requires Mn(2+) as cofactor.

It localises to the cytoplasm. The catalysed reaction is (2R,3S)-3-isopropylmalate + NAD(+) = 4-methyl-2-oxopentanoate + CO2 + NADH. It functions in the pathway amino-acid biosynthesis; L-leucine biosynthesis; L-leucine from 3-methyl-2-oxobutanoate: step 3/4. Catalyzes the oxidation of 3-carboxy-2-hydroxy-4-methylpentanoate (3-isopropylmalate) to 3-carboxy-4-methyl-2-oxopentanoate. The product decarboxylates to 4-methyl-2 oxopentanoate. This chain is 3-isopropylmalate dehydrogenase, found in Bacteroides fragilis (strain ATCC 25285 / DSM 2151 / CCUG 4856 / JCM 11019 / LMG 10263 / NCTC 9343 / Onslow / VPI 2553 / EN-2).